Consider the following 185-residue polypeptide: Ribosome-recycling factor (185 aa).

Belongs to the RRF family.

It is found in the cytoplasm. Its function is as follows. Responsible for the release of ribosomes from messenger RNA at the termination of protein biosynthesis. May increase the efficiency of translation by recycling ribosomes from one round of translation to another. The sequence is that of Ribosome-recycling factor from Pseudomonas fluorescens (strain SBW25).